Reading from the N-terminus, the 248-residue chain is Ureidoacrylate amidohydrolase RutB (248 aa).

Catalysis depends on D41, which acts as the Proton acceptor. K150 is a catalytic residue. C183 (nucleophile) is an active-site residue.

It belongs to the isochorismatase family. RutB subfamily.

The enzyme catalyses (Z)-3-ureidoacrylate + H2O + H(+) = (Z)-3-aminoacrylate + NH4(+) + CO2. It carries out the reaction (Z)-3-ureidoacrylate + H2O = (Z)-3-aminoacrylate + carbamate + H(+). The catalysed reaction is (Z)-2-methylureidoacrylate + H2O + H(+) = (Z)-2-methylaminoacrylate + NH4(+) + CO2. Hydrolyzes ureidoacrylate to form aminoacrylate and carbamate. The carbamate hydrolyzes spontaneously, thereby releasing one of the nitrogen atoms of the pyrimidine ring as ammonia and one of its carbon atoms as CO2. The sequence is that of Ureidoacrylate amidohydrolase RutB from Methylorubrum extorquens (strain ATCC 14718 / DSM 1338 / JCM 2805 / NCIMB 9133 / AM1) (Methylobacterium extorquens).